An 848-amino-acid chain; its full sequence is DNA mismatch repair protein MutS (848 aa).

Residue 605–612 (GPNMAGKS) participates in ATP binding.

It belongs to the DNA mismatch repair MutS family.

In terms of biological role, this protein is involved in the repair of mismatches in DNA. It is possible that it carries out the mismatch recognition step. This protein has a weak ATPase activity. The protein is DNA mismatch repair protein MutS of Leptospira borgpetersenii serovar Hardjo-bovis (strain JB197).